The primary structure comprises 215 residues: MSFLSMSAPSGNVFMVVAPSGAGKSSLVRALLDRDPSLVLSISCTTRAPRPGEQDGREYRFVDQAEFARLRDAQQLLEWAEVHGNFYGTPRDRIDEATRAGHDVLLEIDWQGARQVKQRYPEAIGIFVLPPSIDELESRLKARGQDAPQVIARRLLAAGGEIAHAPECEYVIINQEFSVALTELVQIISAARLRFSSQAVRNAQLFSQLGIPAAH.

Positions 11-189 (GNVFMVVAPS…ALTELVQIIS (179 aa)) constitute a Guanylate kinase-like domain. 18 to 25 (APSGAGKS) contacts ATP.

Belongs to the guanylate kinase family.

The protein resides in the cytoplasm. The catalysed reaction is GMP + ATP = GDP + ADP. In terms of biological role, essential for recycling GMP and indirectly, cGMP. The sequence is that of Guanylate kinase from Bordetella bronchiseptica (strain ATCC BAA-588 / NCTC 13252 / RB50) (Alcaligenes bronchisepticus).